Reading from the N-terminus, the 525-residue chain is Frizzled-4 (525 aa).

The signal sequence occupies residues 1–24 (MERRGGGGRMLALLLAGLLGGARG). Residues 25 to 200 (FGDEEERRCD…KCGYDAGLYS (176 aa)) are Extracellular-facing. One can recognise an FZ domain in the interval 28–149 (EEERRCDAIR…NDHNHMCMEG (122 aa)). Disulfide bonds link cysteine 33–cysteine 94, cysteine 41–cysteine 87, cysteine 78–cysteine 116, cysteine 105–cysteine 146, cysteine 109–cysteine 133, cysteine 169–cysteine 188, cysteine 192–cysteine 270, and cysteine 290–cysteine 365. N-linked (GlcNAc...) asparagine glycosylation occurs at asparagine 47. An N-linked (GlcNAc...) asparagine glycan is attached at asparagine 132. Residues 201-231 (RSAKEFTDIWMAVWASLCFISTAFTVLTFLI) traverse the membrane as a helical segment. Over 232–237 (DSSRFS) the chain is Cytoplasmic. A helical membrane pass occupies residues 238-263 (YPERPIIFLSMCYNIYSIAYIVRLTV). The Extracellular segment spans residues 264 to 287 (GRERISCDFEEAAEPVLIQEGLKN). The chain crosses the membrane as a helical span at residues 288–321 (TGCAIIFLLMYFFGMASSIWWVILTLTWFLAAGL). Over 322–324 (KWG) the chain is Cytoplasmic. A helical membrane pass occupies residues 325–353 (HEAIEMHSSYFHIAAWAIPAVKTIVILIM). Topologically, residues 354 to 371 (RLVDADELTGLCYVGNQN) are extracellular. Residues 372 to 406 (LDALTGFVVAPLFTYLVIGTLFIAAGLVALFKIRS) form a helical membrane-spanning segment. The Cytoplasmic segment spans residues 407–419 (NLQKDGTKTDKLE). The chain crosses the membrane as a helical span at residues 420–448 (RLMVKIGVFSVLYTVPATCVIACYFYEIS). Topologically, residues 449-461 (NWAVFRYSADDSN) are extracellular. A helical transmembrane segment spans residues 462–483 (MAVEMLKIFMSLLVGITSGMWI). At 484–525 (WSAKTLHTWQKCSNRLVNSGKVKREKRADGWVKPGKGNETVV) the chain is on the cytoplasmic side. The Lys-Thr-X-X-X-Trp motif, mediates interaction with the PDZ domain of Dvl family members signature appears at 487 to 492 (KTLHTW). The short motif at 523–525 (TVV) is the PDZ-binding element.

Belongs to the G-protein coupled receptor Fz/Smo family. Interacts (via FZ domain) with TSKU; TSKU competes with WNT2B for binding to FZD4, inhibiting Wnt signaling and repressing peripheral eye development. In terms of tissue distribution, expressed in the developing kidney, interdigital spaces and optic cup.

Its subcellular location is the cell membrane. Functionally, receptor for Wnt proteins. Most frizzled receptors are coupled to the beta-catenin canonical signaling pathway, which leads to the activation of disheveled proteins, inhibition of GSK-3 kinase, nuclear accumulation of beta-catenin and activation of Wnt target genes. A second signaling pathway involving PKC and calcium fluxes has been seen for some family members, but it is not yet clear if it represents a distinct pathway or if it can be integrated in the canonical pathway, as PKC seems to be required for Wnt-mediated inactivation of GSK-3 kinase. Both pathways seem to involve interactions with G-proteins. May be involved in transduction and intercellular transmission of polarity information during tissue morphogenesis and/or in differentiated tissues. This Gallus gallus (Chicken) protein is Frizzled-4 (FZD4).